Here is a 182-residue protein sequence, read N- to C-terminus: NAD(P)H-quinone oxidoreductase subunit J (182 aa).

The protein belongs to the complex I 30 kDa subunit family. NDH-1 can be composed of about 15 different subunits; different subcomplexes with different compositions have been identified which probably have different functions.

It is found in the cellular thylakoid membrane. It catalyses the reaction a plastoquinone + NADH + (n+1) H(+)(in) = a plastoquinol + NAD(+) + n H(+)(out). It carries out the reaction a plastoquinone + NADPH + (n+1) H(+)(in) = a plastoquinol + NADP(+) + n H(+)(out). NDH-1 shuttles electrons from an unknown electron donor, via FMN and iron-sulfur (Fe-S) centers, to quinones in the respiratory and/or the photosynthetic chain. The immediate electron acceptor for the enzyme in this species is believed to be plastoquinone. Couples the redox reaction to proton translocation, and thus conserves the redox energy in a proton gradient. Cyanobacterial NDH-1 also plays a role in inorganic carbon-concentration. The protein is NAD(P)H-quinone oxidoreductase subunit J of Synechococcus sp. (strain WH7803).